Here is a 308-residue protein sequence, read N- to C-terminus: tRNA dimethylallyltransferase (308 aa).

ATP is bound at residue 10–17; that stretch reads GPTGVGKT. 12–17 lines the substrate pocket; it reads TGVGKT. Positions 35–38 are interaction with substrate tRNA; it reads DSRQ.

It belongs to the IPP transferase family. Monomer. Mg(2+) is required as a cofactor.

The catalysed reaction is adenosine(37) in tRNA + dimethylallyl diphosphate = N(6)-dimethylallyladenosine(37) in tRNA + diphosphate. Its function is as follows. Catalyzes the transfer of a dimethylallyl group onto the adenine at position 37 in tRNAs that read codons beginning with uridine, leading to the formation of N6-(dimethylallyl)adenosine (i(6)A). The polypeptide is tRNA dimethylallyltransferase (Fervidobacterium nodosum (strain ATCC 35602 / DSM 5306 / Rt17-B1)).